The primary structure comprises 322 residues: AETTAPSVYPLAPGTALKSNSMVTLGCLVKGYFPEPVTVTWNSGALSSGVHTFPAVLQSGLYTLTSSVTVPSSTWSSQAVTCNVAHPASSTKVDKKIVPRECNPCGCTGSEVSSVFIFPPKTKDVLTITLTPKVTCVVVDISQNDPEVRFSWFIDDVEVHTAQTHAPEKQSNSTLRSVSELPIVHRDWLNGKTFKCKVNSGAFPAPIEKSISKPEGTPRGPQVYTMAPPKEEMTQSQVSITCMVKGFYPPDIYTEWKMNGQPQENYKNTPPTMDTDGSYFLYSKLNVKKETWQQGNTFTCSVLHEGLHNHHTEKSLSHSPGK.

Ig-like domains lie at 6-98, 115-212, and 221-317; these read PSVY…KKIV, VFIF…KSIS, and PQVY…KSLS. 3 disulfide bridges follow: Cys27–Cys82, Cys136–Cys196, and Cys242–Cys300. Asn172 carries N-linked (GlcNAc...) asparagine glycosylation.

The sequence is that of Ig gamma-2A chain C region (Igg-2a) from Rattus norvegicus (Rat).